The following is a 215-amino-acid chain: Large ribosomal subunit protein uL3 (215 aa).

Positions 124 to 164 (KRHGFSRGPMTHGSKNHREPGSTGAGTTPGRIYPGKRMAGR) are disordered.

Belongs to the universal ribosomal protein uL3 family. In terms of assembly, part of the 50S ribosomal subunit. Forms a cluster with proteins L14 and L19.

Its function is as follows. One of the primary rRNA binding proteins, it binds directly near the 3'-end of the 23S rRNA, where it nucleates assembly of the 50S subunit. This is Large ribosomal subunit protein uL3 from Synechococcus sp. (strain RCC307).